The following is a 1336-amino-acid chain: Lysine-specific demethylase 2B (1336 aa).

The interval 1-25 (MAGPQMGGSAEDHPPRKRHAAEKQK) is disordered. Residues 15–25 (PRKRHAAEKQK) are compositionally biased toward basic residues. S57 is subject to Phosphoserine. The JmjC domain maps to 178–346 (FSHTKLEHLV…MQLRIYEIED (169 aa)). T239 lines the substrate pocket. Residues H242 and D244 each contribute to the Fe cation site. Residue K259 participates in substrate binding. H314 lines the Fe cation pocket. The span at 410-430 (MEEEACDQQPQEEEEKDEEGE) shows a compositional bias: acidic residues. The segment at 410-465 (MEEEACDQQPQEEEEKDEEGEGRDRAPKPPTDGSTSPTSTPSEDQEALGKKPKAPA) is disordered. Residues 440–451 (TDGSTSPTSTPS) show a composition bias toward low complexity. Phosphoserine is present on residues S474 and S477. A Phosphothreonine modification is found at T493. Position 497 is a phosphoserine (S497). The CXXC-type zinc-finger motif lies at 606-652 (ARRRRTRCRKCEACLRTECGECHFCKDMKKFGGPGRMKQSCIMRQCI). Zn(2+) contacts are provided by C613, C616, C619, C624, C627, C630, C646, C651, C662, C665, C688, C691, H696, C699, C719, and C722. The segment at 659–725 (TAVCLVCGEA…CWECPKCNHA (67 aa)) adopts a PHD-type zinc-finger fold. Disordered stretches follow at residues 727–843 (KTGK…SLSP) and 855–1034 (QLKP…SPPK). Residues 749–799 (KEQKMNRDNKEGQEPAKRRSECEEAPRRRSDEHSKKVPPDGLLRRKSDDVH) are compositionally biased toward basic and acidic residues. The span at 819–843 (SSLQTSPGSSSHLSPRPPLGSSLSP) shows a compositional bias: low complexity. Glycyl lysine isopeptide (Lys-Gly) (interchain with G-Cter in SUMO2) cross-links involve residues K857 and K890. Basic and acidic residues predominate over residues 902–911 (PKTRESDHSR). The span at 932 to 941 (KVKMRRKRRL) shows a compositional bias: basic residues. Positions 942-960 (PNKELSRELSKELNHEIQR) are enriched in basic and acidic residues. A coiled-coil region spans residues 943 to 971 (NKELSRELSKELNHEIQRTENSLANENQQ). S951 carries the phosphoserine modification. Over residues 961–971 (TENSLANENQQ) the composition is skewed to polar residues. S975, S979, S1018, and S1031 each carry phosphoserine. A compositionally biased stretch (low complexity) spans 1014–1024 (PSLRSPPRVIS). In terms of domain architecture, F-box spans 1059-1105 (DGAAHVMHREVWMAVFSYLSHQDLCVCMRVCRTWNRWCCDKRLWTRI). 7 LRR repeats span residues 1093 to 1120 (NRWCCDKRLWTRIDLNHCKSITPLMLSG), 1133 to 1154 (WTNISKKQLSWLINRLPGLRDL), 1156 to 1182 (LSGCSWIAVSALCSSSCPLLRTLDVQW), 1222 to 1247 (GLDITDASLRLIIRHMPLLSKLHLSY), 1248 to 1277 (CNHVTDQSINLLTAVGTTTRDSLTEINLSD), 1278 to 1302 (CNKVTDQCLSFFKRCGNICHIDLRY), and 1303 to 1336 (CKQVTKEGCEQFIAEMSVSVQFGQVEEKLLQKLS).

It belongs to the JHDM1 histone demethylase family. Interacts with SKP1, forming heterodimers. The heterodimeric KDM2B-SKP1 complex interacts with the PCGF1-BCORL1 heterodimeric complex to form a homotetrameric polycomb repression complex 1 (PRC1.1). Directly interacts with CUL1. The SKP1-KDM2B complex interacts with UBB. Fe(2+) is required as a cofactor.

It localises to the nucleus. Its subcellular location is the nucleolus. The protein resides in the chromosome. The catalysed reaction is N(6),N(6)-dimethyl-L-lysyl(36)-[histone H3] + 2 2-oxoglutarate + 2 O2 = L-lysyl(36)-[histone H3] + 2 formaldehyde + 2 succinate + 2 CO2. Its activity is regulated as follows. Histone demethylase activity is inhibited by fumarate. In terms of biological role, histone demethylase that demethylates 'Lys-4' and 'Lys-36' of histone H3, thereby playing a central role in histone code. Preferentially demethylates trimethylated H3 'Lys-4' and dimethylated H3 'Lys-36' residue while it has weak or no activity for mono- and tri-methylated H3 'Lys-36'. Preferentially binds the transcribed region of ribosomal RNA and represses the transcription of ribosomal RNA genes which inhibits cell growth and proliferation. May also serve as a substrate-recognition component of the SCF (SKP1-CUL1-F-box protein)-type E3 ubiquitin ligase complex. The protein is Lysine-specific demethylase 2B (KDM2B) of Homo sapiens (Human).